The following is a 132-amino-acid chain: D-ribose pyranase (132 aa).

Histidine 20 (proton donor) is an active-site residue. Residues aspartate 28, histidine 99, and 121 to 123 (YAN) contribute to the substrate site.

Belongs to the RbsD / FucU family. RbsD subfamily. In terms of assembly, homodecamer.

It localises to the cytoplasm. It catalyses the reaction beta-D-ribopyranose = beta-D-ribofuranose. It participates in carbohydrate metabolism; D-ribose degradation; D-ribose 5-phosphate from beta-D-ribopyranose: step 1/2. Catalyzes the interconversion of beta-pyran and beta-furan forms of D-ribose. This is D-ribose pyranase from Chromobacterium violaceum (strain ATCC 12472 / DSM 30191 / JCM 1249 / CCUG 213 / NBRC 12614 / NCIMB 9131 / NCTC 9757 / MK).